The following is a 213-amino-acid chain: MKTYQSEFLAFCLERGVLRFGEFTLKSGRISPYFFNAGLFNTGSDLARLGRFYAQAISESGAAFDMLFGPAYKGIPLAAATAIALAEHHGRDLPWCFNRKEAKDHGEGGSLVGAPLTGRVLIVDDVITAGTAIRESVDIIRAAGAEPVGVAIALNRQERGKGEHSAIQEVEAEYGLKVINIASLGDLIEFMREQGGLDEHLKAVEAYRAQYGV.

K26 is a 5-phospho-alpha-D-ribose 1-diphosphate binding site. 34–35 (FF) provides a ligand contact to orotate. 5-phospho-alpha-D-ribose 1-diphosphate contacts are provided by residues 72-73 (YK), R99, K100, K103, H105, and 124-132 (DDVITAGTA). Orotate is bound by residues T128 and R156.

The protein belongs to the purine/pyrimidine phosphoribosyltransferase family. PyrE subfamily. As to quaternary structure, homodimer. The cofactor is Mg(2+).

It catalyses the reaction orotidine 5'-phosphate + diphosphate = orotate + 5-phospho-alpha-D-ribose 1-diphosphate. Its pathway is pyrimidine metabolism; UMP biosynthesis via de novo pathway; UMP from orotate: step 1/2. Its function is as follows. Catalyzes the transfer of a ribosyl phosphate group from 5-phosphoribose 1-diphosphate to orotate, leading to the formation of orotidine monophosphate (OMP). The polypeptide is Orotate phosphoribosyltransferase (Thioalkalivibrio sulfidiphilus (strain HL-EbGR7)).